We begin with the raw amino-acid sequence, 160 residues long: MNIVALHVVLYQPEIPANTGNIARTCAATNTTLHLIRPLGFSTDDKMLKRAGLDYWEFVNVVYHDSLEELFEAYKKGKFFFITKFGQQPHTSFDYTDLDEDYFFVFGRETSGLPKDLIQNNMDRCLRLPMTEHVRSLNLSNTAAILVYEALRQQNYRDLK.

4 residues coordinate S-adenosyl-L-methionine: isoleucine 82, glycine 107, leucine 128, and serine 136.

Belongs to the class IV-like SAM-binding methyltransferase superfamily. RNA methyltransferase TrmH family. TrmL subfamily.

Its subcellular location is the cytoplasm. It carries out the reaction cytidine(34) in tRNA + S-adenosyl-L-methionine = 2'-O-methylcytidine(34) in tRNA + S-adenosyl-L-homocysteine + H(+). The enzyme catalyses 5-carboxymethylaminomethyluridine(34) in tRNA(Leu) + S-adenosyl-L-methionine = 5-carboxymethylaminomethyl-2'-O-methyluridine(34) in tRNA(Leu) + S-adenosyl-L-homocysteine + H(+). Its function is as follows. Could methylate the ribose at the nucleotide 34 wobble position in tRNA. This chain is Putative tRNA (cytidine(34)-2'-O)-methyltransferase (cspR), found in Bacillus subtilis (strain 168).